Consider the following 269-residue polypeptide: MLKEQLIAEAQKIDASVALDSIFESVNISPEAKETFGTVFEATVKQHAVKLAESHIAKIAEKAEEEVEKNKEEAEEKAEKKIAEQASKFLDHLAKEWLTENKLAVDKGIKAELFESMLGGLKELFVEHNVVVPEESVDVVAEMEEELQEHKEESARLFEELNKRDAYINYVQREVALSESTKDLTESQKEKVSALVEGIDYSDAFSSKLSAIVEMVKKSNKDESTITESINTPDTEEAGLNFVTEAVEDKSAQGAEDIVSVYAKVASRF.

This sequence belongs to the T4likevirus capsid assembly scaffolding protein family.

The protein localises to the virion. In terms of biological role, scaffolding protein involved in the icosahedric procapsid assembly. Coassembles with the capsid proteins to form the procapsid, in which the scaffolding protein is found within the external shell of icosahedrally arranged capsid protein subunits. In a subsequent step the scaffolding protein molecules are cleaved by the viral protease and released, except for the internal peptide VII. Cleavage product of Gp22 that is incorporated into the mature phage head. In Escherichia phage AR1 (Bacteriophage AR1), this protein is Capsid assembly scaffolding protein (22).